A 98-amino-acid polypeptide reads, in one-letter code: Tan_12Cys (98 aa).

An N-terminal signal peptide occupies residues 1 to 21 (MNLKVLFLLAMVLVTLCLGED). Positions 22–28 (RVTDRRK) are excised as a propeptide.

The protein belongs to the teretoxin C (TC) superfamily. Contains 6 disulfide bonds. In terms of tissue distribution, expressed by the venom duct.

The protein localises to the secreted. The chain is Tan_12Cys from Terebra anilis (Auger snail).